Consider the following 304-residue polypeptide: MPKIHDSSCTSGLTPSQRSHVLAEALPWLLHYRDKIVVVKYGGNAMIDDELKRAFAADMVFLRAVGARPVVVHGGGPQINMMLDKVGLEGEFRGGFRVTSPEVMEYVRMVLFGKVGRELVGLINEHGPYAVGASGEDAGLFTAEKFQPEIEGELVDIGRVGSITDVDPTSLFDLIDAGRIPVVSTIAPDDDGLVYNINADTAAGALAGALDAERLVMLTNVPGLYTDWPNKDSLVSSLTPAELEELLPTLDSGMIPKMTACLDAIHNGVKAAHVIDGRVPHSVLLELMTEGGIGTMISSESYEH.

Residues G75–G76, R97, and N196 contribute to the substrate site.

The protein belongs to the acetylglutamate kinase family. ArgB subfamily.

Its subcellular location is the cytoplasm. The enzyme catalyses N-acetyl-L-glutamate + ATP = N-acetyl-L-glutamyl 5-phosphate + ADP. It functions in the pathway amino-acid biosynthesis; L-arginine biosynthesis; N(2)-acetyl-L-ornithine from L-glutamate: step 2/4. Catalyzes the ATP-dependent phosphorylation of N-acetyl-L-glutamate. This is Acetylglutamate kinase from Corynebacterium urealyticum (strain ATCC 43042 / DSM 7109).